The chain runs to 565 residues: Nephronectin (565 aa).

Residues 1-19 (MDFLLALVLVSSLYLQAAA) form the signal peptide. The region spanning 52–87 (SWGQCQPVCQPRCKHGECIGPNKCKCHPGYAGKTCN) is the EGF-like 1 domain. Disulfide bonds link Cys56/Cys69, Cys60/Cys75, Cys77/Cys86, Cys93/Cys104, Cys100/Cys113, and Cys115/Cys127. Residues 89–128 (DLNECGLKPRPCKHRCMNTYGSYKCYCLNGYMLMPDGSCS) enclose the EGF-like 2; calcium-binding domain. The EGF-like 3 domain maps to 132 to 168 (TCSMANCQYGCDVVKGQIRCQCPSPGLQLAPDGRTCV). The EGF-like 4; calcium-binding domain maps to 169–213 (DVDECATGRASCPRFRQCVNTFGSYICKCHKGFNLMYIGGKYQCH). 6 disulfides stabilise this stretch: Cys173–Cys186, Cys180–Cys195, Cys197–Cys212, Cys218–Cys231, Cys225–Cys240, and Cys242–Cys253. The 41-residue stretch at 214–254 (DIDECSLGQYQCSSFARCYNIHGSYKCKCKEGYQGDGLTCV) folds into the EGF-like 5; calcium-binding domain. The segment at 301–373 (YIPPIITNRP…PPGGITVDNR (73 aa)) is disordered. The segment covering 304 to 316 (PIITNRPTSKPTT) has biased composition (low complexity). The segment covering 317-349 (RPTPKPTPIPTPPPPPPLPTELRTPLPPTTPER) has biased composition (pro residues). Residues 382 to 384 (RGD) carry the Integrin interaction motif. The MAM domain maps to 420–563 (HSCNFDHGLC…VSLKKGHCSE (144 aa)).

It belongs to the nephronectin family. Homodimer and homotrimer.

The protein localises to the secreted. It localises to the extracellular space. Its subcellular location is the extracellular matrix. Functional ligand of integrin alpha-8/beta-1 in kidney development. Regulates the expression of GDNF with integrin alpha-8/beta-1 which is essential for kidney development. May also play a role in the development and function of various tissues, regulating cell adhesion, spreading and survival through the binding of several integrins. In Pongo abelii (Sumatran orangutan), this protein is Nephronectin (NPNT).